Consider the following 174-residue polypeptide: UPF0113 protein APE_0516.1 (174 aa).

Belongs to the UPF0113 family.

The sequence is that of UPF0113 protein APE_0516.1 from Aeropyrum pernix (strain ATCC 700893 / DSM 11879 / JCM 9820 / NBRC 100138 / K1).